A 432-amino-acid polypeptide reads, in one-letter code: Adenylosuccinate synthetase (432 aa).

GTP-binding positions include 12–18 (GDEGKGK) and 40–42 (GHT). Aspartate 13 (proton acceptor) is an active-site residue. Mg(2+) contacts are provided by aspartate 13 and glycine 40. IMP-binding positions include 13–16 (DEGK), 38–41 (NAGH), threonine 132, arginine 146, glutamine 226, threonine 241, and arginine 305. The active-site Proton donor is histidine 41. 301–307 (VVTGRKR) serves as a coordination point for substrate. Residues arginine 307, 333 to 335 (KLD), and 415 to 417 (STS) each bind GTP.

It belongs to the adenylosuccinate synthetase family. In terms of assembly, homodimer. The cofactor is Mg(2+).

It is found in the cytoplasm. It catalyses the reaction IMP + L-aspartate + GTP = N(6)-(1,2-dicarboxyethyl)-AMP + GDP + phosphate + 2 H(+). It participates in purine metabolism; AMP biosynthesis via de novo pathway; AMP from IMP: step 1/2. Functionally, plays an important role in the de novo pathway of purine nucleotide biosynthesis. Catalyzes the first committed step in the biosynthesis of AMP from IMP. The chain is Adenylosuccinate synthetase from Rhizobium johnstonii (strain DSM 114642 / LMG 32736 / 3841) (Rhizobium leguminosarum bv. viciae).